We begin with the raw amino-acid sequence, 77 residues long: Acyl carrier protein (77 aa).

The region spanning Ser-2 to Gln-77 is the Carrier domain. At Ser-37 the chain carries O-(pantetheine 4'-phosphoryl)serine.

The protein belongs to the acyl carrier protein (ACP) family. Post-translationally, 4'-phosphopantetheine is transferred from CoA to a specific serine of apo-ACP by AcpS. This modification is essential for activity because fatty acids are bound in thioester linkage to the sulfhydryl of the prosthetic group.

The protein resides in the cytoplasm. Its pathway is lipid metabolism; fatty acid biosynthesis. Carrier of the growing fatty acid chain in fatty acid biosynthesis. In Vibrio campbellii (strain ATCC BAA-1116), this protein is Acyl carrier protein.